The primary structure comprises 373 residues: Peptide chain release factor subunit 1 (373 aa).

This sequence belongs to the eukaryotic release factor 1 family. Heterodimer of two subunits, one of which binds GTP.

The protein localises to the cytoplasm. In terms of biological role, directs the termination of nascent peptide synthesis (translation) in response to the termination codons UAA, UAG and UGA. This is Peptide chain release factor subunit 1 (prf1) from Aeropyrum pernix (strain ATCC 700893 / DSM 11879 / JCM 9820 / NBRC 100138 / K1).